The primary structure comprises 350 residues: Dihydroorotate dehydrogenase (quinone) (350 aa).

FMN is bound by residues 59 to 63 and Thr83; that span reads AGLDK. Substrate is bound at residue Lys63. Substrate is bound at residue 108-112; the sequence is NRMGF. FMN contacts are provided by Asn136 and Asn169. Asn169 is a binding site for substrate. The Nucleophile role is filled by Ser172. A substrate-binding site is contributed by Asn174. The FMN site is built by Lys214 and Thr242. Position 243-244 (243-244) interacts with substrate; the sequence is NT. FMN is bound by residues Gly265, Gly294, and 315–316; that span reads YS.

Belongs to the dihydroorotate dehydrogenase family. Type 2 subfamily. In terms of assembly, monomer. The cofactor is FMN.

It is found in the cell membrane. The catalysed reaction is (S)-dihydroorotate + a quinone = orotate + a quinol. The protein operates within pyrimidine metabolism; UMP biosynthesis via de novo pathway; orotate from (S)-dihydroorotate (quinone route): step 1/1. In terms of biological role, catalyzes the conversion of dihydroorotate to orotate with quinone as electron acceptor. In Aromatoleum aromaticum (strain DSM 19018 / LMG 30748 / EbN1) (Azoarcus sp. (strain EbN1)), this protein is Dihydroorotate dehydrogenase (quinone).